We begin with the raw amino-acid sequence, 116 residues long: Fluoride-specific ion channel FluC 1 (116 aa).

A run of 4 helical transmembrane segments spans residues 1-21, 32-52, 54-74, and 93-113; these read MYAP…RYLV, FPLG…WLAG, GAAD…FTTF, and VVVY…LGYH. Na(+)-binding residues include G69 and T72.

It belongs to the fluoride channel Fluc/FEX (TC 1.A.43) family.

The protein localises to the cell membrane. It catalyses the reaction fluoride(in) = fluoride(out). Its activity is regulated as follows. Na(+) is not transported, but it plays an essential structural role and its presence is essential for fluoride channel function. Fluoride-specific ion channel. Important for reducing fluoride concentration in the cell, thus reducing its toxicity. The protein is Fluoride-specific ion channel FluC 1 of Geobacillus kaustophilus (strain HTA426).